The chain runs to 216 residues: Guanylate kinase (216 aa).

One can recognise a Guanylate kinase-like domain in the interval G15–R193. Position 22 to 29 (A22 to S29) interacts with ATP.

Belongs to the guanylate kinase family.

The protein localises to the cytoplasm. The enzyme catalyses GMP + ATP = GDP + ADP. Its function is as follows. Essential for recycling GMP and indirectly, cGMP. This is Guanylate kinase from Cupriavidus pinatubonensis (strain JMP 134 / LMG 1197) (Cupriavidus necator (strain JMP 134)).